A 332-amino-acid polypeptide reads, in one-letter code: Putative ankyrin repeat protein R896 (332 aa).

ANK repeat units lie at residues 159 to 188 (GNDN…NVKS), 190 to 218 (DNCA…NVKA), 219 to 248 (DGNY…DIKA), 249 to 278 (AQNL…NIST), and 280 to 308 (NDYV…DIFS).

This is Putative ankyrin repeat protein R896 from Acanthamoeba polyphaga mimivirus (APMV).